The chain runs to 161 residues: Cytochrome c-type biogenesis protein CcmE (161 aa).

The Cytoplasmic segment spans residues 1–8 (MNPRRKKR). A helical; Signal-anchor for type II membrane protein transmembrane segment spans residues 9–29 (LTLAVALIAGVAAVASLLLYA). At 30–161 (LNSNLNLFYT…TYNQKALEDK (132 aa)) the chain is on the periplasmic side. 2 residues coordinate heme: His-131 and Tyr-135. A disordered region spans residues 142–161 (EAMGQTHEKPTYNQKALEDK). Residues 147–161 (THEKPTYNQKALEDK) are compositionally biased toward basic and acidic residues.

Belongs to the CcmE/CycJ family.

It is found in the cell inner membrane. Its function is as follows. Heme chaperone required for the biogenesis of c-type cytochromes. Transiently binds heme delivered by CcmC and transfers the heme to apo-cytochromes in a process facilitated by CcmF and CcmH. This Shewanella frigidimarina (strain NCIMB 400) protein is Cytochrome c-type biogenesis protein CcmE.